The primary structure comprises 402 residues: Nodal homolog 4-A (402 aa).

The first 18 residues, methionine 1–serine 18, serve as a signal peptide directing secretion. Residues leucine 19–arginine 278 constitute a propeptide that is removed on maturation. N-linked (GlcNAc...) asparagine glycans are attached at residues asparagine 37, asparagine 238, and asparagine 340. Intrachain disulfides connect cysteine 302–cysteine 368, cysteine 331–cysteine 399, and cysteine 335–cysteine 401.

The protein belongs to the TGF-beta family. Homodimer; disulfide-linked. As to expression, during blastula stages, expressed in the endoderm at a higher level dorsally than ventrally. Expressed in the deep cells of the Spemann organizer at the gastrula stage. Expressed in the notochord (a derivative of the organizer) and neural tube during the neural stages.

The protein resides in the secreted. Cooperation and regulatory loops of multiple nodals are essential for mesendoderm patterning in early embryos. Plays a role in mesoderm formation and may be required for neural development. This Xenopus laevis (African clawed frog) protein is Nodal homolog 4-A (nodal4-a).